Here is a 364-residue protein sequence, read N- to C-terminus: MTNKRKSAKPLEPAKRTPKLRTKKSRDLSASESSCDFVKVTRAGLHSRNKHQGRYDFAKLTQALPSLAPFVIKNPKGEASISFSDSTAVKMLNKALLSAHYQVANWDIPAGYLCPPIPGRADYIHRLAELLEGEVKGTFPHEKVQALDIGVGANAIYPIIAICDYRWRYTGSDVDPKSIESAQRIADSNPVLQGQLELKLQDQSQHIFQGIIGPTDYFHVTTCNPPFHASAQEAAFGTQRKLDNLAANRLKKGVTAKAGSQKISKNKPILNFGGQNSELWCQGGESSFLKRMANESERFAHQVLWFSTLVSKKDNVRPLRKQLEKLGVRSIRVVEMSQGQKVSRFVAWSFMDKLQRGEWIKLRG.

Residues 1-28 (MTNKRKSAKPLEPAKRTPKLRTKKSRDL) form a disordered region.

Belongs to the methyltransferase superfamily. METTL16/RlmF family.

The protein localises to the cytoplasm. It carries out the reaction adenosine(1618) in 23S rRNA + S-adenosyl-L-methionine = N(6)-methyladenosine(1618) in 23S rRNA + S-adenosyl-L-homocysteine + H(+). Specifically methylates the adenine in position 1618 of 23S rRNA. The protein is Ribosomal RNA large subunit methyltransferase F of Vibrio vulnificus (strain YJ016).